A 137-amino-acid chain; its full sequence is Small ribosomal subunit protein uS9 (137 aa).

The interval 100–137 (ENRPPLKSEGYLTRDPRAKERKKYGLHKARKAPQYSKR) is disordered. Residues 118-137 (KERKKYGLHKARKAPQYSKR) show a composition bias toward basic residues.

It belongs to the universal ribosomal protein uS9 family.

The protein is Small ribosomal subunit protein uS9 of Microcystis aeruginosa (strain NIES-843 / IAM M-2473).